A 387-amino-acid chain; its full sequence is tRNA pseudouridine synthase B (387 aa).

Residue D43 is the Nucleophile of the active site.

The protein belongs to the pseudouridine synthase TruB family. Type 1 subfamily.

The catalysed reaction is uridine(55) in tRNA = pseudouridine(55) in tRNA. Responsible for synthesis of pseudouridine from uracil-55 in the psi GC loop of transfer RNAs. In Bifidobacterium longum subsp. infantis (strain ATCC 15697 / DSM 20088 / JCM 1222 / NCTC 11817 / S12), this protein is tRNA pseudouridine synthase B.